Here is a 126-residue protein sequence, read N- to C-terminus: Glycine cleavage system H protein (126 aa).

Residues 22 to 104 (VAIIGITEYA…YEKAWMVKVE (83 aa)) form the Lipoyl-binding domain. K63 is subject to N6-lipoyllysine.

Belongs to the GcvH family. The glycine cleavage system is composed of four proteins: P, T, L and H. The cofactor is (R)-lipoate.

The glycine cleavage system catalyzes the degradation of glycine. The H protein shuttles the methylamine group of glycine from the P protein to the T protein. Its function is as follows. Is also involved in protein lipoylation via its role as an octanoyl/lipoyl carrier protein intermediate. This is Glycine cleavage system H protein from Staphylococcus aureus (strain USA300).